The primary structure comprises 2280 residues: Metacaspase-3 (2280 aa).

Disordered regions lie at residues 56 to 83, 202 to 284, 791 to 819, 931 to 954, 994 to 1015, 1278 to 1306, and 1469 to 1500; these read ILSK…DRED, YSTE…THRG, YKNS…MVNN, DDNS…RYDK, SGKY…DDSE, KTNN…NPFI, and KAPT…NANA. The span at 63–83 shows a compositional bias: basic and acidic residues; it reads NKNENIKKRINEKDNDTDRED. 2 stretches are compositionally biased toward polar residues: residues 205 to 219 and 228 to 278; these read EHTQ…TSKR and DKAQ…NRKG. 2 stretches are compositionally biased toward low complexity: residues 793 to 819 and 931 to 941; these read NSMN…MVNN and DDNSVQDSFFS. 2 stretches are compositionally biased toward low complexity: residues 1278–1303 and 1482–1500; these read KTNN…NNSN and APTN…NANA.

The protein belongs to the peptidase C14B family.

Protease that cleaves specifically after arginine or lysine residues. This Plasmodium falciparum (isolate 3D7) protein is Metacaspase-3.